The primary structure comprises 477 residues: Bifunctional protein HldE (477 aa).

The segment at 1–318 (MKVTLSEFER…ENAVRGRADT (318 aa)) is ribokinase. Position 179 is an N6-acetyllysine (lysine 179). Residue 195-198 (NLSE) participates in ATP binding. Aspartate 264 is an active-site residue. Positions 344-477 (MTNGVFDILH…IKKIQQDKKG (134 aa)) are cytidylyltransferase.

This sequence in the N-terminal section; belongs to the carbohydrate kinase PfkB family. It in the C-terminal section; belongs to the cytidylyltransferase family. Homodimer.

It catalyses the reaction D-glycero-beta-D-manno-heptose 7-phosphate + ATP = D-glycero-beta-D-manno-heptose 1,7-bisphosphate + ADP + H(+). It carries out the reaction D-glycero-beta-D-manno-heptose 1-phosphate + ATP + H(+) = ADP-D-glycero-beta-D-manno-heptose + diphosphate. It functions in the pathway nucleotide-sugar biosynthesis; ADP-L-glycero-beta-D-manno-heptose biosynthesis; ADP-L-glycero-beta-D-manno-heptose from D-glycero-beta-D-manno-heptose 7-phosphate: step 1/4. Its pathway is nucleotide-sugar biosynthesis; ADP-L-glycero-beta-D-manno-heptose biosynthesis; ADP-L-glycero-beta-D-manno-heptose from D-glycero-beta-D-manno-heptose 7-phosphate: step 3/4. In terms of biological role, catalyzes the phosphorylation of D-glycero-D-manno-heptose 7-phosphate at the C-1 position to selectively form D-glycero-beta-D-manno-heptose-1,7-bisphosphate. Its function is as follows. Catalyzes the ADP transfer from ATP to D-glycero-beta-D-manno-heptose 1-phosphate, yielding ADP-D-glycero-beta-D-manno-heptose. The chain is Bifunctional protein HldE from Shigella boydii serotype 18 (strain CDC 3083-94 / BS512).